The chain runs to 109 residues: U4-lycotoxin-Ls1a (109 aa).

The N-terminal stretch at 1-22 is a signal peptide; sequence MKVLVLFSVLFLTLFSYSSTEA. Positions 23–44 are excised as a propeptide; it reads IDEFDSDAEEDMLSLMANEQVR. Residues 45–88 are knottin domain; sequence AKACTPRLHDCSHDRHSCCRGELFKDVCYCFYPEGEDKTEVCSC. Cystine bridges form between cysteine 48/cysteine 63, cysteine 55/cysteine 72, cysteine 62/cysteine 88, and cysteine 74/cysteine 86. The interval 89 to 108 is linear cationic cytotoxin domain; sequence QQPKSHKYIEKVVDKAKTVV.

The protein belongs to the neurotoxin 19 (CSTX) family. 05 (U4-Lctx) subfamily. As to expression, expressed by the venom gland.

It localises to the secreted. Its function is as follows. Enhances the high-affinity desensitization of human P2RX3 purinoceptors. In Lycosa singoriensis (Wolf spider), this protein is U4-lycotoxin-Ls1a.